The primary structure comprises 1059 residues: WD repeat-containing protein on Y chromosome (1059 aa).

WD repeat units lie at residues 121–161 (DFCP…ALTA), 170–209 (RSKT…FTLK), 214–256 (RLPQ…KVTT), 344–383 (CVPR…KPSV), 387–426 (GHTS…LLQT), 476–515 (SHTK…KMTI), 528–567 (LEPV…CMRT), 616–658 (QHSD…RRYD), 714–759 (MRQL…GFKG), 766–805 (MAGD…IPNE), and 849–888 (AHRA…IGLL).

This is WD repeat-containing protein on Y chromosome from Anopheles gambiae (African malaria mosquito).